The following is a 481-amino-acid chain: MQWEVVIGLEIHTQLATQSKIFSGSATTFGSEPNTQASLVDLGMPGVLPVLNQEAVRMACMFGLAIDAEIGPRNVFARKNYFYPDLPKGYQISQMDLPIVGKGHLDIALEDGTIKRIGVTRAHLEEDAGKSLHEDFNGATGIDLNRAGTPLLEIVSEPDMRSAKEAVAYVKAIHALVRYLGICDGNMAEGSLRCDCNVSVRPKGQVEFGTRCEIKNVNSFRFIERAINSEIQRQIDLIEDGGKVVQETRLYDPNKDETRSMRSKEEANDYRYFPDPDLLPVVIEQSFLDSVRAALPELPTQKVERFQSQYGLSAYDANVLASSREQADYFEQVVSIGGDAKLAANWVMVELGSLLNKLGVEIDQSPVSAEQLGGMLLRIRDNTISGKIAKTVFEAMAAGEGDADSIIESKGLKQVTDTGAIDKMLDEMLAANAEQVEQYRAADEAKRGKMFGFFVGQAMKASKGKANPGQVNQLLKAKLEG.

Belongs to the GatB/GatE family. GatB subfamily. Heterotrimer of A, B and C subunits.

The enzyme catalyses L-glutamyl-tRNA(Gln) + L-glutamine + ATP + H2O = L-glutaminyl-tRNA(Gln) + L-glutamate + ADP + phosphate + H(+). It carries out the reaction L-aspartyl-tRNA(Asn) + L-glutamine + ATP + H2O = L-asparaginyl-tRNA(Asn) + L-glutamate + ADP + phosphate + 2 H(+). Its function is as follows. Allows the formation of correctly charged Asn-tRNA(Asn) or Gln-tRNA(Gln) through the transamidation of misacylated Asp-tRNA(Asn) or Glu-tRNA(Gln) in organisms which lack either or both of asparaginyl-tRNA or glutaminyl-tRNA synthetases. The reaction takes place in the presence of glutamine and ATP through an activated phospho-Asp-tRNA(Asn) or phospho-Glu-tRNA(Gln). This chain is Aspartyl/glutamyl-tRNA(Asn/Gln) amidotransferase subunit B, found in Pseudomonas entomophila (strain L48).